Consider the following 711-residue polypeptide: Ribosomal RNA large subunit methyltransferase K/L (711 aa).

The THUMP domain occupies 42 to 153; that stretch reads DAQRAVLWSR…KGRATISVDL (112 aa).

Belongs to the methyltransferase superfamily. RlmKL family.

Its subcellular location is the cytoplasm. It catalyses the reaction guanosine(2445) in 23S rRNA + S-adenosyl-L-methionine = N(2)-methylguanosine(2445) in 23S rRNA + S-adenosyl-L-homocysteine + H(+). The enzyme catalyses guanosine(2069) in 23S rRNA + S-adenosyl-L-methionine = N(2)-methylguanosine(2069) in 23S rRNA + S-adenosyl-L-homocysteine + H(+). Specifically methylates the guanine in position 2445 (m2G2445) and the guanine in position 2069 (m7G2069) of 23S rRNA. The sequence is that of Ribosomal RNA large subunit methyltransferase K/L from Xanthomonas oryzae pv. oryzae (strain KACC10331 / KXO85).